A 339-amino-acid polypeptide reads, in one-letter code: Scoulerine-9-O-methyltransferase 3 (339 aa).

Residue methionine 161 coordinates S-adenosyl-L-methionine. Aspartate 164 provides a ligand contact to substrate. Residues threonine 165, glycine 191, aspartate 214, 228 to 229, and lysine 242 contribute to the S-adenosyl-L-methionine site; that span reads DV. 243–247 is a substrate binding site; it reads SILHE. The active-site Proton acceptor is the histidine 246.

The protein belongs to the class I-like SAM-binding methyltransferase superfamily. Cation-independent O-methyltransferase family. COMT subfamily. As to quaternary structure, homodimer. Forms heterodimer with SOMT2. The heterodimer SOMT2-SOMT3 possesses 3-O-acetyl-4'-O-demethylpapaveroxine 4'-O-methyltransferase activity, where SOMT2 is the catalytic subunit. Highly expressed in capsules. Expressed is stems. Expressed at low levels in roots.

It carries out the reaction (S)-scoulerine + S-adenosyl-L-methionine = (S)-tetrahydrocolumbamine + S-adenosyl-L-homocysteine + H(+). It functions in the pathway alkaloid biosynthesis. Methyltransferase involved in the biosynthesis of the benzylisoquinoline alkaloid noscapine. Catalyzes the conversion of (S)-scoulerine to (S)-tetrahydrocolumbamine. The sequence is that of Scoulerine-9-O-methyltransferase 3 from Papaver somniferum (Opium poppy).